The following is a 473-amino-acid chain: MASKTYQAGVKEYRQTYWQPDYVPLDTDILACFKITPQAGVDREEAAAAVAAESSTGTWTTVWTDLLTDMDYYKGRAYRIEDVPGDDACFYAFIAYPIDLFEEGSVVNVFTSLVGNVFGFKAIRALRLEDVRFPIAYVKTCGGPPSGIQVERDKMNKYGRPLLGCTIKPKLGLSAKNYGRAVYECLRGSLDFTKDDENINSQPFMRWRDRFEFVQEATLKAEAETGERKGHYLNVTAPTPEEMYKRAEFAKEIGAPIIMHDYLAGGLCANAGLANWCRNNGMLLHVHRAMHAVLDRNPHHGIHFRVLTKILRLSGGDHLHTGTVVGKLEGDRASTLGWIDLLRESFVPEDRSRGIFFDQDWGSMPGAFAVASGGIHVWHMPALVAIFGDDSVLQFGGGTLGHPWGNAAGAHANRVALEACVQARNEGRQIEKEGREILTAAAQHSPELKIAMETWKEIKFEFDTVDKLDIAHK.

Substrate is bound by residues Asn-116 and Thr-166. Catalysis depends on Lys-168, which acts as the Proton acceptor. Residue Lys-170 coordinates substrate. Positions 194, 196, and 197 each coordinate Mg(2+). Lys-194 is subject to N6-carboxylysine. His-287 serves as the catalytic Proton acceptor. Substrate-binding residues include Arg-288, His-320, and Ser-372.

It belongs to the RuBisCO large chain family. Type I subfamily. As to quaternary structure, heterohexadecamer of 8 large chains and 8 small chains. The cofactor is Mg(2+).

It carries out the reaction 2 (2R)-3-phosphoglycerate + 2 H(+) = D-ribulose 1,5-bisphosphate + CO2 + H2O. The catalysed reaction is D-ribulose 1,5-bisphosphate + O2 = 2-phosphoglycolate + (2R)-3-phosphoglycerate + 2 H(+). Functionally, ruBisCO catalyzes two reactions: the carboxylation of D-ribulose 1,5-bisphosphate, the primary event in carbon dioxide fixation, as well as the oxidative fragmentation of the pentose substrate. Both reactions occur simultaneously and in competition at the same active site. The polypeptide is Ribulose bisphosphate carboxylase large chain (Nitrosomonas sp. (strain ENI-11)).